An 881-amino-acid polypeptide reads, in one-letter code: MAAPGAPAEYGYIRTVLGQQILGQLDSSSLALPSEAKLKLAGSSGRGGQTVKSLRIQEQVQQTLARKGRSSVGNGNLHRTSSVPEYVYNLHLVENDFVGGRSPVPKTYDMLKAGTTATYEGRWGRGTAQYSSQKSVEERSLRHPLRRLEISPDSSPERAHYTHSDYQYSQRSQAGHTLHHQESRRAALLVPPRYARSEIVGVSRAGTTSRQRHFDTYHRQYQHGSVSDTVFDSIPANPALLTYPRPGTSRSMGNLLEKENYLTAGLTVGQVRPLVPLQPVTQNRASRSSWHQSSFHSTRTLREAGPSVAVDSSGRRAHLTVGQAAAGGSGNLLTERSTFTDSQLGNADMEMTLERAVSMLEADHMLPSRISAAATFIQHECFQKSEARKRVNQLRGILKLLQLLKVQNEDVQRAVCGALRNLVFEDNDNKLEVAELNGVPRLLQVLKQTRDLETKKQITDHTVNLRSRNGWPGAVAHACNPSTLGGQGGRITRSGVRDQPDQHGLLWNLSSNDKLKNLMITEALLTLTENIIIPFSGWPEGDYPKANGLLDFDIFYNVTGCLRNMSSAGADGRKAMRRCDGLIDSLVHYVRGTIADYQPDDKATENCVCILHNLSYQLEAELPEKYSQNIYIQNRNIQTDNNKSIGCFGSRSRKVKEQYQDVPMPEEKSNPKGVEWLWHSIVIRMYLSLIAKSVRNYTQEASLGALQNLTAGSGPMPTSVAQTVVQKESGLQHTRKMLHVGDPSVKKTAISLLRNLSRNLSLQNEIAKETLPDLVSIIPDTVPSTDLLIETTASACYTLNNIIQNSYQNARDLLNTGGIQKIMAISAGDAYASNKASKAASVLLYSLWAHTELHHAYKKAQFKKTDFVNSRTAKAYHSLKD.

The tract at residues 1-348 is required for interaction with influenza A virus RNA polymerase subunit PB1; it reads MAAPGAPAEY…FTDSQLGNAD (348 aa). Residues 1–360 are required for binding to single-stranded DNA; that stretch reads MAAPGAPAEY…MTLERAVSML (360 aa). The residue at position 44 (Ser-44) is a Phosphoserine. The residue at position 46 (Arg-46) is an Omega-N-methylarginine. Position 82 is a phosphoserine; by MARK3 (Ser-82). Residues Ser-132, Ser-135, Ser-151, Ser-154, Ser-155, Ser-169, and Ser-172 each carry the phosphoserine modification. Thr-177 is modified (phosphothreonine). Phosphoserine is present on residues Ser-183, Ser-197, Ser-251, Ser-294, and Ser-329. Positions 282-314 are disordered; it reads QNRASRSSWHQSSFHSTRTLREAGPSVAVDSSG. Residues 286–297 show a composition bias toward low complexity; it reads SRSSWHQSSFHS. 8 ARM repeats span residues 341–383, 385–424, 427–467, 571–616, 671–711, 719–758, 763–804, and 807–849; these read DSQL…ECFQ, SEARKRVNQLRGILKLLQLLKVQNEDVQRAVCGALRNLVF, NDNK…NLRS, DGRK…NLSY, PKGV…NLTA, SVAQTVVQKESGLQHTRKMLHVGDPSVKKTAISLLRNLSR, QNEI…NIIQ, and YQNA…SLWA.

It belongs to the beta-catenin family. As to quaternary structure, interacts with DSC2. Interacts with JUP. Interacts with KRT5/CK5, KRT8/CK8, KRT14/CK14, KRT18/CK18 and VIM. Interacts (via N-terminus) with MARK3/C-TAK1. Interacts with DSP. Interacts with DSG1, DSG2 and DSG3. Interacts (via N-terminus) with CTNNB1. Interacts with CDH1. Interacts with the RNA polymerase III (Pol III) complex proteins POLR3A/RPC155, POLR3F/RPC39 and POLR3C/RPC82. Interacts with CTNNA3. Interacts (via N-terminus) with SCN5A/Nav1.5. Interacts with ANK3/ANKG and GJA1/CX43. In terms of assembly, (Microbial infection) Interacts (via N-terminus) with influenza A virus RNA polymerase subunit PB1 (via C-terminus); the interaction competitively inhibits the interaction between the subunits PB1 and PB2. As to expression, expressed at intercalated disks in the heart (at protein level). Expressed in gingival epithelial, endothelial and fibroblast cells (at protein level). Faintly expressed in tracheal epithelial cells (at protein level). Widely expressed. Found at desmosomal plaques in simple and stratified epithelia and in non-epithelial tissues such as myocardium and lymph node follicles. In most stratified epithelia found in the desmosomes of the basal cell layer and seems to be absent from suprabasal strata. (Microbial infection) Abundantly expressed in tracheal epithelial cells following influenza A virus infection (at protein level).

Its subcellular location is the nucleus. The protein resides in the cell junction. It is found in the desmosome. It localises to the cytoplasm. Its function is as follows. A component of desmosome cell-cell junctions which are required for positive regulation of cellular adhesion. Regulates focal adhesion turnover resulting in changes in focal adhesion size, cell adhesion and cell spreading, potentially via transcriptional modulation of beta-integrins. Required to maintain gingival epithelial barrier function. Important component of the desmosome that is also required for localization of desmosome component proteins such as DSC2, DSG2 and JUP to the desmosome cell-cell junction. Required for the formation of desmosome cell junctions in cardiomyocytes, thereby required for the correct formation of the heart, specifically trabeculation and formation of the atria walls. Loss of desmosome cell junctions leads to mis-localization of DSP and DSG2 resulting in disruption of cell-cell adhesion and disordered intermediate filaments. Modulates profibrotic gene expression in cardiomyocytes via regulation of DSP expression and subsequent activation of downstream TGFB1 and MAPK14/p38 MAPK signaling. Required for cardiac sodium current propagation and electrical synchrony in cardiac myocytes, via ANK3 stabilization and modulation of SCN5A/Nav1.5 localization to cell-cell junctions. Required for mitochondrial function, nuclear envelope integrity and positive regulation of SIRT3 transcription via maintaining DES localization at its nuclear envelope and cell tip anchoring points, and thereby preserving regulation of the transcriptional program. Maintenance of nuclear envelope integrity protects against DNA damage and transcriptional dysregulation of genes, especially those involved in the electron transport chain, thereby preserving mitochondrial function and protecting against superoxide radical anion generation. Binds single-stranded DNA (ssDNA). May regulate the localization of GJA1 to gap junctions in intercalated disks of the heart. Involved in the inhibition of viral infection by influenza A viruses (IAV). Acts as a host restriction factor for IAV viral propagation, potentially via disrupting the interaction of IAV polymerase complex proteins. In Homo sapiens (Human), this protein is Plakophilin-2.